We begin with the raw amino-acid sequence, 21 residues long: Cupiennin-6e (21 aa).

Serine 21 bears the Serine amide mark.

Expressed by the venom gland.

The protein localises to the secreted. The protein is Cupiennin-6e of Cupiennius salei (American wandering spider).